Consider the following 233-residue polypeptide: Thrombin-like enzyme elegaxobin-1 (233 aa).

The region spanning 1–224 is the Peptidase S1 domain; the sequence is VIGGDECNIN…HLDWIKGIIA (224 aa). Intrachain disulfides connect C7/C138, C25/C41, C73/C231, C117/C185, C149/C164, and C175/C200. Catalysis depends on charge relay system residues H40 and D85. The active-site Charge relay system is S179.

The protein belongs to the peptidase S1 family. Snake venom subfamily. In terms of assembly, monomer. In terms of tissue distribution, expressed by the venom gland.

It localises to the secreted. Its function is as follows. Thrombin-like snake venom serine protease that clots rabbit fibrinogen. Only the beta chain of fibrinogen (FGB) is cleaved, releasing fibrinopeptide B. Incubation with human fibrinogen alpha and beta resulted in cleavage of both fibrinogen chains but generated neither fibrinopeptide A nor fibrinopeptide B. Promotes clotting of rabbit fibrinogen, but not bovine or human fibrinogen. This chain is Thrombin-like enzyme elegaxobin-1, found in Protobothrops elegans (Elegant pitviper).